The sequence spans 826 residues: Protein FAM171B (826 aa).

An N-terminal signal peptide occupies residues 1-32 (MARLCRRVPCTLLLGLAVVLLKARLVPAAARA). The Extracellular portion of the chain corresponds to 33–353 (ELSRSDLSLI…DSKDITAYHT (321 aa)). Residues 52–71 (QQQQQKQLEEAEEERTEVPG) are disordered. Asn-108, Asn-113, Asn-213, and Asn-268 each carry an N-linked (GlcNAc...) asparagine glycan. Residues 354-374 (VFLTAILGGTIVIVIGFFAVL) form a helical membrane-spanning segment. Residues 375–826 (LCYCRDKCGT…REERPLIPIN (452 aa)) lie on the Cytoplasmic side of the membrane. Disordered stretches follow at residues 429–448 (NAKNSSYSPQKKEPSKAETE), 474–493 (QNNYSRNPTQSLEPNVGSKQ), and 774–826 (HPGE…IPIN). The span at 438 to 448 (QKKEPSKAETE) shows a compositional bias: basic and acidic residues. A compositionally biased stretch (polar residues) spans 474-486 (QNNYSRNPTQSLE). Over residues 774 to 786 (HPGEESPGRKSTV) the composition is skewed to basic and acidic residues. A Phosphoserine modification is found at Ser-794. The segment covering 805-826 (AKRDSKTNIWKKREERPLIPIN) has biased composition (basic and acidic residues).

Belongs to the FAM171 family.

It is found in the cytoplasmic granule. The protein resides in the membrane. The protein is Protein FAM171B (FAM171B) of Homo sapiens (Human).